A 79-amino-acid chain; its full sequence is Translational regulator CsrA (79 aa).

It belongs to the CsrA/RsmA family. Homodimer; the beta-strands of each monomer intercalate to form a hydrophobic core, while the alpha-helices form wings that extend away from the core.

It is found in the cytoplasm. Its function is as follows. A translational regulator that binds mRNA to regulate translation initiation and/or mRNA stability. Usually binds in the 5'-UTR at or near the Shine-Dalgarno sequence preventing ribosome-binding, thus repressing translation. Its main target seems to be the major flagellin gene, while its function is anatagonized by FliW. This Syntrophus aciditrophicus (strain SB) protein is Translational regulator CsrA.